A 31-amino-acid polypeptide reads, in one-letter code: Palustrin-2c (31 aa).

C23 and C29 are disulfide-bonded.

As to expression, expressed by the skin glands.

Its subcellular location is the secreted. Its function is as follows. Antimicrobial activity against Gram-negative bacterium E.coli. The polypeptide is Palustrin-2c (Lithobates palustris (Pickerel frog)).